A 549-amino-acid polypeptide reads, in one-letter code: MFCEQCEQTASGNGCHQWGACGKSPEVNAVQDLLVYCLRGLAPVTIKARELGISCHEADVFTGETLFATMTNVNFERKRFNVYIRQCIHIREGLKNSIEKISKKPISWSEVSNYQPNFSESLAEQGREKDLTFISQSTNNVDIFSLKLTVLYGIKGTASYTFHAQELGQEDEKVYAFIQEALASLDRNDLSLEDWVNIALKVGEINLRAMELLDQGHTTTYGHPTPTKVPLNPKQGKGILVSGHDIKQLAALLQQTVNKGLMVYTHGELLPAHGYPILKEKYPHFYGHYGTAWQNQTKDFAHFPGAIIVTTNCLMPPHETYEDKLFTIGPVGYSGINYLSSDDKGVPDYSLAIETSLKMAGFTTDEAPRHVMVGFAHNTVLNVSEQVIEAVKKGEIRHFFLVGGCDGAKPGRTYYTEFVEKVPKDCIVLTLACGKFRFFDKQLGEIGNLPRLMDVGQCNDAYSAIKIALGLAEAFQVSVNDLPLSMILSWYEQKAVAVLLTLLYLGIKDIRLGPTLPAFITPNVLRFLSETYNLQPITTPDQDLVACLA.

Cysteine 3, cysteine 6, cysteine 15, and cysteine 21 together coordinate [4Fe-4S] cluster. Hybrid [4Fe-2O-2S] cluster-binding residues include histidine 244, glutamate 268, cysteine 313, cysteine 405, cysteine 433, cysteine 458, glutamate 492, and lysine 494. The residue at position 405 (cysteine 405) is a Cysteine persulfide.

The protein belongs to the HCP family. [4Fe-4S] cluster is required as a cofactor. Requires hybrid [4Fe-2O-2S] cluster as cofactor.

The protein localises to the cytoplasm. The catalysed reaction is A + NH4(+) + H2O = hydroxylamine + AH2 + H(+). Its function is as follows. Catalyzes the reduction of hydroxylamine to form NH(3) and H(2)O. This Crocosphaera subtropica (strain ATCC 51142 / BH68) (Cyanothece sp. (strain ATCC 51142)) protein is Hydroxylamine reductase.